We begin with the raw amino-acid sequence, 354 residues long: Macrosialin (354 aa).

A signal peptide spans 1 to 21 (MRLAVLFSGALLGLLAAQGTG). At 22–319 (NDCPHKKSAT…QSFSCPSDRS (298 aa)) the chain is on the extracellular side. The segment at 23–140 (DCPHKKSATL…SPGFTSSAHP (118 aa)) is mucin-like. Residues 40 to 51 (PTVTESTGTTSH) are compositionally biased toward low complexity. Residues 40-162 (PTVTESTGTT…SKETIGDYTW (123 aa)) are disordered. Residues 52–61 (RTTKSHKTTT) show a composition bias toward basic residues. Low complexity predominate over residues 62 to 84 (HRTTTTGTTSHGPTTATHNPTTT). 2 tandem repeats follow at residues 70–99 (TSHG…NSTA) and 100–129 (TSQG…NSTA). Residues 70–129 (TSHGPTTATHNPTTTSHGNVTVHPTSNSTATSQGPSTATHSPATTSHGNATVHPTSNSTA) are 2 X 30 AA tandem repeats. Polar residues predominate over residues 85-102 (SHGNVTVHPTSNSTATSQ). N-linked (GlcNAc...) asparagine glycosylation is found at asparagine 88 and asparagine 96. Residues 103–117 (GPSTATHSPATTSHG) are compositionally biased toward low complexity. Residues asparagine 118 and asparagine 126 are each glycosylated (N-linked (GlcNAc...) asparagine). Positions 121–135 (VHPTSNSTATSPGFT) are enriched in polar residues. The span at 140–150 (PEPPPPSPSPS) shows a compositional bias: pro residues. Residues asparagine 164, asparagine 199, asparagine 246, asparagine 261, and asparagine 279 are each glycosylated (N-linked (GlcNAc...) asparagine). A disulfide bridge links cysteine 169 with cysteine 207. An intrachain disulfide couples cysteine 277 to cysteine 314. Residues 320-344 (ILLPLIIGLILLGLLALVLIAFCII) form a helical membrane-spanning segment. The Cytoplasmic portion of the chain corresponds to 345 to 354 (RRRPSAYQAL).

The protein belongs to the LAMP family. In terms of processing, N- and O-glycosylated. As to expression, highly expressed by blood monocytes and tissue macrophages. Also expressed in lymphocytes, fibroblasts and endothelial cells. Expressed in many tumor cell lines which could allow them to attach to selectins on vascular endothelium, facilitating their dissemination to secondary sites.

The protein resides in the cell membrane. The protein localises to the endosome membrane. Its subcellular location is the lysosome membrane. In terms of biological role, could play a role in phagocytic activities of tissue macrophages, both in intracellular lysosomal metabolism and extracellular cell-cell and cell-pathogen interactions. Binds to tissue- and organ-specific lectins or selectins, allowing homing of macrophage subsets to particular sites. Rapid recirculation of CD68 from endosomes and lysosomes to the plasma membrane may allow macrophages to crawl over selectin-bearing substrates or other cells. The chain is Macrosialin (CD68) from Homo sapiens (Human).